A 738-amino-acid chain; its full sequence is Phosphoribosylformylglycinamidine synthase subunit PurL (738 aa).

Residue His53 is part of the active site. Positions 56 and 95 each coordinate ATP. Residue Glu97 participates in Mg(2+) binding. Substrate-binding positions include 98–101 (SHNH) and Arg120. His99 functions as the Proton acceptor in the catalytic mechanism. Mg(2+) is bound at residue Asp121. A substrate-binding site is contributed by Gln244. Residue Asp274 coordinates Mg(2+). 318-320 (ESQ) is a binding site for substrate. Residues Asp499 and Gly536 each coordinate ATP. Residue Asn537 coordinates Mg(2+). Ser539 lines the substrate pocket.

The protein belongs to the FGAMS family. As to quaternary structure, monomer. Part of the FGAM synthase complex composed of 1 PurL, 1 PurQ and 2 PurS subunits.

It is found in the cytoplasm. It carries out the reaction N(2)-formyl-N(1)-(5-phospho-beta-D-ribosyl)glycinamide + L-glutamine + ATP + H2O = 2-formamido-N(1)-(5-O-phospho-beta-D-ribosyl)acetamidine + L-glutamate + ADP + phosphate + H(+). It functions in the pathway purine metabolism; IMP biosynthesis via de novo pathway; 5-amino-1-(5-phospho-D-ribosyl)imidazole from N(2)-formyl-N(1)-(5-phospho-D-ribosyl)glycinamide: step 1/2. Part of the phosphoribosylformylglycinamidine synthase complex involved in the purines biosynthetic pathway. Catalyzes the ATP-dependent conversion of formylglycinamide ribonucleotide (FGAR) and glutamine to yield formylglycinamidine ribonucleotide (FGAM) and glutamate. The FGAM synthase complex is composed of three subunits. PurQ produces an ammonia molecule by converting glutamine to glutamate. PurL transfers the ammonia molecule to FGAR to form FGAM in an ATP-dependent manner. PurS interacts with PurQ and PurL and is thought to assist in the transfer of the ammonia molecule from PurQ to PurL. In Lacticaseibacillus paracasei (strain ATCC 334 / BCRC 17002 / CCUG 31169 / CIP 107868 / KCTC 3260 / NRRL B-441) (Lactobacillus paracasei), this protein is Phosphoribosylformylglycinamidine synthase subunit PurL.